We begin with the raw amino-acid sequence, 84 residues long: Cysteine-rich protamine (84 aa).

2 cysteine pairs are disulfide-bonded: C16–C24 and C64–C80.

Cross-linked by interchain disulfide bonds around the DNA-helix. In terms of tissue distribution, testis.

It localises to the nucleus. The protein resides in the chromosome. Its function is as follows. Protamines substitute for histones in the chromatin of sperm during the haploid phase of spermatogenesis. They compact sperm DNA into a highly condensed, stable and inactive complex. This protamine condenses spermiogenic chromatin in a pattern which comprises fibers with a progressively larger diameter and lamellae that finally undergo definitive coalescence. The chain is Cysteine-rich protamine from Eledone cirrhosa (Curled octopus).